Reading from the N-terminus, the 135-residue chain is uncharacterized protein (135 aa).

A run of 4 helical transmembrane segments spans residues 7–25, 29–51, 64–85, and 89–108; these read WSAAVLAAAVSFLYGEWTI, ILLTLVVIDYGTGLVAAGVTGNI, VFIFVMVAIAHMIDTVLLEVGI, and ALIFMAAVVFYIVNELISIF.

Belongs to the bacteriophage holin family. Cp-1 holin subfamily.

It is found in the cell membrane. This is an uncharacterized protein from Halalkalibacterium halodurans (strain ATCC BAA-125 / DSM 18197 / FERM 7344 / JCM 9153 / C-125) (Bacillus halodurans).